The primary structure comprises 211 residues: Ethylene-responsive transcription factor LEP (211 aa).

2 disordered regions span residues 1–21 (MNTT…TRFL) and 74–110 (NFVY…NDPV). Residues 19 to 76 (RFLGVRRRPWGRYAAEIRDPTTKERHWLGTFDTAEEAALAYDRAARSMRGTRARTNFV) constitute a DNA-binding region (AP2/ERF). The segment covering 81–92 (PPSSSVTSIVSP) has biased composition (low complexity). Residues 93–107 (DDPPPPPPPPAPPSN) show a composition bias toward pro residues.

This sequence belongs to the AP2/ERF transcription factor family. ERF subfamily. As to expression, expressed in germinating seeds. Present in young shoots, at low levels, especially in leaf primordia and developing leaf blades. Also detected in vascular tissue, mostly in xylem, of young leaves, petioles and hypocotyls.

It is found in the nucleus. Cell division-promoting factor involved in leaf blade differentiation, inflorescence branching, as well as in carpel and silique shape. Promotes the number of xylem cells. Positively regulates the gibberellin signaling pathway leading to germination, hypocotyl elongation, and leaf expansion. Probably acts as a transcriptional activator. Binds to the GCC-box pathogenesis-related promoter element. May be involved in the regulation of gene expression by stress factors and by components of stress signal transduction pathways. This chain is Ethylene-responsive transcription factor LEP (LEP), found in Arabidopsis thaliana (Mouse-ear cress).